The primary structure comprises 407 residues: Aurofusarin biosynthesis cluster protein S (407 aa).

The N-terminal stretch at 1–35 (MSKQKPSLWRALRALSFIISIPLLIQYLVLKWYST) is a signal peptide. N-linked (GlcNAc...) asparagine glycosylation is found at Asn52, Asn174, Asn196, Asn274, and Asn312. 2 FAS1 domains span residues 52–192 (NLTV…DTVL) and 195–365 (PNST…DSIL).

In terms of assembly, might be part of an extracellular enzyme complex composed of GIP1, aurF, aurO and aurS.

It localises to the secreted. Its subcellular location is the extracellular space. It participates in pigment biosynthesis. Its function is as follows. Part of the gene cluster that mediates the biosynthesis of aurofusarin, a red mycelium pigment which is acting as a mycotoxin. The first step is performed by the polyketide synthase which condenses one acetyl-CoA and 6 malonyl-CoA units to form the first intermediate, the cyclic heptaketide and yellow pigment YWA1. The C2 hydroxyl group in the pyrone ring of YWA1 is probably formed during ring closure by an aldol-type cyclization reaction. The dehydratase aurZ then acts as the first tailoring enzyme in the aurofusarin biosynthetic pathway by converting YWA1 to nor-rubrofusarin. Nor-rubrofusarin is then methylated to rubrofusarin by the O-methyltransferase aurJ. Rubrofusarin is then transported across the plasma membrane by the rubrofusarin-specific pump aurT for further enzymatic processing by the extracellular complex composed of GIP1, aurF, aurO and aurS to yield aurofusarin. The sequence is that of Aurofusarin biosynthesis cluster protein S from Gibberella zeae (strain ATCC MYA-4620 / CBS 123657 / FGSC 9075 / NRRL 31084 / PH-1) (Wheat head blight fungus).